We begin with the raw amino-acid sequence, 423 residues long: Serine--tRNA ligase 1 (423 aa).

231-233 (TAE) provides a ligand contact to L-serine. ATP is bound at residue 262 to 264 (RSE). Position 285 (glutamate 285) interacts with L-serine. 349–352 (EISS) provides a ligand contact to ATP. Serine 384 contacts L-serine.

Belongs to the class-II aminoacyl-tRNA synthetase family. Type-1 seryl-tRNA synthetase subfamily. As to quaternary structure, homodimer. The tRNA molecule binds across the dimer.

It is found in the cytoplasm. It carries out the reaction tRNA(Ser) + L-serine + ATP = L-seryl-tRNA(Ser) + AMP + diphosphate + H(+). It catalyses the reaction tRNA(Sec) + L-serine + ATP = L-seryl-tRNA(Sec) + AMP + diphosphate + H(+). Its pathway is aminoacyl-tRNA biosynthesis; selenocysteinyl-tRNA(Sec) biosynthesis; L-seryl-tRNA(Sec) from L-serine and tRNA(Sec): step 1/1. Catalyzes the attachment of serine to tRNA(Ser). Is also able to aminoacylate tRNA(Sec) with serine, to form the misacylated tRNA L-seryl-tRNA(Sec), which will be further converted into selenocysteinyl-tRNA(Sec). This is Serine--tRNA ligase 1 from Enterococcus faecalis (strain ATCC 700802 / V583).